The sequence spans 314 residues: Aromatic prenyltransferase (314 aa).

The protein belongs to the aromatic prenyltransferase family.

In terms of biological role, prenyltransferase that attaches isoprenoid moieties to carbon atoms of aromatic substrates in an enzyme-catalyzed Friedel-Crafts reaction. This chain is Aromatic prenyltransferase, found in Arthroderma otae (strain ATCC MYA-4605 / CBS 113480) (Microsporum canis).